The following is a 466-amino-acid chain: Citrate synthase, mitochondrial (466 aa).

The N-terminal 27 residues, 1–27, are a transit peptide targeting the mitochondrion; the sequence is MALLTAAARLLGTKNASCLVLAARHAS. The SIFI-degron motif lies at 2–21; it reads ALLTAAARLLGTKNASCLVL. An N6-succinyllysine modification is found at Lys-57. Lys-76 bears the N6-acetyllysine; alternate mark. At Lys-76 the chain carries N6-succinyllysine; alternate. An N6-succinyllysine mark is found at Lys-103 and Lys-193. His-301 is a catalytic residue. An N6-acetyllysine; alternate mark is found at Lys-321 and Lys-327. N6-succinyllysine; alternate is present on residues Lys-321 and Lys-327. His-347 is an active-site residue. Residue Arg-356 coordinates oxaloacetate. At Lys-375 the chain carries N6-acetyllysine; alternate. The residue at position 375 (Lys-375) is an N6-succinyllysine; alternate. Lys-382 is subject to N6-acetyllysine. Lys-393 bears the N6-acetyllysine; alternate mark. Lys-393 is modified (N6-succinyllysine; alternate). Position 395 is an N6,N6,N6-trimethyllysine (Lys-395). Asp-402 is an active-site residue. The oxaloacetate site is built by Arg-428 and Arg-448. Position 450 is an N6-succinyllysine (Lys-450). N6-acetyllysine; alternate is present on Lys-459. At Lys-459 the chain carries N6-succinyllysine; alternate.

Belongs to the citrate synthase family. As to quaternary structure, homodimer. In terms of processing, methylated. Trimethylation at Lys-395 by CSKMT decreases citrate synthase activity. In response to mitochondrial stress, the precursor protein is ubiquitinated by the SIFI complex in the cytoplasm before mitochondrial import, leading to its degradation. Within the SIFI complex, UBR4 initiates ubiquitin chain that are further elongated or branched by KCMF1.

The protein resides in the mitochondrion matrix. It catalyses the reaction oxaloacetate + acetyl-CoA + H2O = citrate + CoA + H(+). It participates in carbohydrate metabolism; tricarboxylic acid cycle; isocitrate from oxaloacetate: step 1/2. Its function is as follows. Key enzyme of the Krebs tricarboxylic acid cycle which catalyzes the synthesis of citrate from acetyl coenzyme A and oxaloacetate. The protein is Citrate synthase, mitochondrial (CS) of Macaca fascicularis (Crab-eating macaque).